A 336-amino-acid chain; its full sequence is Phospho-N-acetylmuramoyl-pentapeptide-transferase (336 aa).

Helical transmembrane passes span 3–23 (LTLIAAIISFMVSAFTMPYFI), 53–73 (GGTVFLLVATAVSLLVSLFSI), 78–98 (SLALISGILSIVVIYGIIGFL), 118–138 (LALQLAGGLMFYFLHVSPSGI), 143–163 (VFGYQLSLGIFYLFFVLFWVV), 174–194 (GIDGLASISVVISLVTYGVIA), 200–220 (FDVLLLIGTMIGALLGFFLFN), 226–246 (VFMGDVGSLALGAMLAAISIA), 251–271 (WTLLIIGIVYVLETSSVMLQV), and 316–336 (AFLWGVGSLASLLVLAILYVF).

Belongs to the glycosyltransferase 4 family. MraY subfamily. Requires Mg(2+) as cofactor.

The protein resides in the cell membrane. It catalyses the reaction UDP-N-acetyl-alpha-D-muramoyl-L-alanyl-gamma-D-glutamyl-L-lysyl-D-alanyl-D-alanine + di-trans,octa-cis-undecaprenyl phosphate = Mur2Ac(oyl-L-Ala-gamma-D-Glu-L-Lys-D-Ala-D-Ala)-di-trans,octa-cis-undecaprenyl diphosphate + UMP. It participates in cell wall biogenesis; peptidoglycan biosynthesis. Functionally, catalyzes the initial step of the lipid cycle reactions in the biosynthesis of the cell wall peptidoglycan: transfers peptidoglycan precursor phospho-MurNAc-pentapeptide from UDP-MurNAc-pentapeptide onto the lipid carrier undecaprenyl phosphate, yielding undecaprenyl-pyrophosphoryl-MurNAc-pentapeptide, known as lipid I. In Streptococcus pyogenes serotype M6 (strain ATCC BAA-946 / MGAS10394), this protein is Phospho-N-acetylmuramoyl-pentapeptide-transferase.